A 424-amino-acid chain; its full sequence is MTNKKAFKEACKFIAGGVNSPVRAFANVQSEPKFISHGKGAYIFDIDGNSYIDYVQSWGPLLFGHCDKDIQKACQKALHKGSSFGAPTLLETELAKLVLSDFPHLEKIRFVSSGTEATMSAIRLARGFTKKDKILKFEGCYHGHSDSLLVSAGSGAATFNSPSSLGVLEDVAKHTLVAKYNDINSVKELFEKNKDIACVIIEPIAGNMGLVPAKQDFLEELAKICKNNQTLLIFDEVMSGYRASYLGSYGINHIQADIITFGKVIGGGLPAAAFASRAEIMDILSPLGGVYQAGTLSGNPLAMAAGIASLTKAKKKTKLYNKLGKLAKKLTQGMKKLADEKGLPLQACHVGSMFGYFFTKDPVSNYQDALKSDLALFSKFHKNMLENGIYLAPSQFETGFICSKMDDKIIDTTLEAVRESFKRI.

Lys263 is modified (N6-(pyridoxal phosphate)lysine).

The protein belongs to the class-III pyridoxal-phosphate-dependent aminotransferase family. HemL subfamily. Homodimer. The cofactor is pyridoxal 5'-phosphate.

Its subcellular location is the cytoplasm. The catalysed reaction is (S)-4-amino-5-oxopentanoate = 5-aminolevulinate. The protein operates within porphyrin-containing compound metabolism; protoporphyrin-IX biosynthesis; 5-aminolevulinate from L-glutamyl-tRNA(Glu): step 2/2. The protein is Glutamate-1-semialdehyde 2,1-aminomutase of Campylobacter jejuni subsp. jejuni serotype O:23/36 (strain 81-176).